The primary structure comprises 421 residues: NAD-specific glutamate dehydrogenase (421 aa).

Residues K71 and K95 each coordinate substrate. Residue K107 is the Proton donor of the active site. 2 residues coordinate NAD(+): T191 and N222. Residue S355 participates in substrate binding.

This sequence belongs to the Glu/Leu/Phe/Val dehydrogenases family. In terms of assembly, homohexamer.

It carries out the reaction L-glutamate + NAD(+) + H2O = 2-oxoglutarate + NH4(+) + NADH + H(+). The polypeptide is NAD-specific glutamate dehydrogenase (gluD) (Clostridioides difficile (Peptoclostridium difficile)).